Reading from the N-terminus, the 295-residue chain is Elongation factor Ts (295 aa).

The interval T79 to V82 is involved in Mg(2+) ion dislocation from EF-Tu.

The protein belongs to the EF-Ts family.

It is found in the cytoplasm. Functionally, associates with the EF-Tu.GDP complex and induces the exchange of GDP to GTP. It remains bound to the aminoacyl-tRNA.EF-Tu.GTP complex up to the GTP hydrolysis stage on the ribosome. The sequence is that of Elongation factor Ts from Mycoplasma capricolum subsp. capricolum (strain California kid / ATCC 27343 / NCTC 10154).